The following is a 193-amino-acid chain: Adenylate kinase (193 aa).

10 to 15 is a binding site for ATP; that stretch reads GAGKGT. The interval 30-59 is NMP; that stretch reads STGDMLRAAVKAGTPIGLKAKAVMDAGGLV. AMP contacts are provided by residues Thr31, Arg36, 57–59, 85–88, and Gln92; these read GLV and GFPR. The segment at 126-142 is LID; sequence KRAKETLAAGGTVRADD. Residue Arg127 coordinates ATP. AMP contacts are provided by Arg139 and Arg150. Residue Ala178 coordinates ATP.

Belongs to the adenylate kinase family. As to quaternary structure, monomer.

It is found in the cytoplasm. It catalyses the reaction AMP + ATP = 2 ADP. Its pathway is purine metabolism; AMP biosynthesis via salvage pathway; AMP from ADP: step 1/1. Its function is as follows. Catalyzes the reversible transfer of the terminal phosphate group between ATP and AMP. Plays an important role in cellular energy homeostasis and in adenine nucleotide metabolism. The sequence is that of Adenylate kinase from Beijerinckia indica subsp. indica (strain ATCC 9039 / DSM 1715 / NCIMB 8712).